The primary structure comprises 559 residues: Podocan-like protein 1 (559 aa).

The first 20 residues, 1–20, serve as a signal peptide directing secretion; that stretch reads MRPQELLLLLLMLKWSLAHT. Asn-64 carries N-linked (GlcNAc...) asparagine glycosylation. LRR repeat units follow at residues 66–89, 90–115, 117–139, 140–160, 161–186, 188–208, 209–231, 233–257, 258–281, 283–302, 303–328, 329–352, 354–373, 374–399, 400–423, 425–444, 445–470, 471–494, 496–515, and 517–541; these read TRAA…ELSR, LSGL…AFES, NQLE…LPRS, LRVA…TFGE, KPAL…TFHG, EVIT…PSLP, ASLE…ALSL, THLR…TFSK, LSSL…LPGT, TILH…RLHK, ARGL…TLRP, LRAL…LPRH, QALV…DLVS, ARAL…AFRR, LRAL…LPAS, RSLR…QLAG, LNKL…TWHE, LQAL…LPEA, EELY…AFLS, and PHLR…ALQG.

The protein belongs to the small leucine-rich proteoglycan (SLRP) family. SLRP class V subfamily. In terms of processing, N-glycosylated. As to expression, detected in bone where it is expressed in osteoblasts and newly formed bone matrix (at protein level). Also expressed weakly in osteoclasts (at protein level). Expressed strongly in calvaria, lung and femur, and weakly in kidney.

Its subcellular location is the secreted. It localises to the extracellular space. The protein resides in the extracellular matrix. The sequence is that of Podocan-like protein 1 from Mus musculus (Mouse).